We begin with the raw amino-acid sequence, 215 residues long: MTNGITILPHTETEHGTGALQALSDRLAETLGGAVVERAIAFDELTLVVEPSEIVRVLTHLRDDPACGFRSFIDICGADYPGREKRFDVVYHLLSLRHNRRIRVKVQTDEATPVPSVITVFPAANWYERETYDLYGILFSGHPDLRRLLTDYGFEGHPLRKDFPLTGFVEVRYDQDEGRVVYEPVKLSQEFRQFDFLSPWEGTDYVLPGDEKAKP.

The protein belongs to the complex I 30 kDa subunit family. In terms of assembly, NDH-1 is composed of 14 different subunits. Subunits NuoB, C, D, E, F, and G constitute the peripheral sector of the complex.

The protein localises to the cell inner membrane. It carries out the reaction a quinone + NADH + 5 H(+)(in) = a quinol + NAD(+) + 4 H(+)(out). In terms of biological role, NDH-1 shuttles electrons from NADH, via FMN and iron-sulfur (Fe-S) centers, to quinones in the respiratory chain. The immediate electron acceptor for the enzyme in this species is believed to be ubiquinone. Couples the redox reaction to proton translocation (for every two electrons transferred, four hydrogen ions are translocated across the cytoplasmic membrane), and thus conserves the redox energy in a proton gradient. This Methylobacterium sp. (strain 4-46) protein is NADH-quinone oxidoreductase subunit C.